Here is a 260-residue protein sequence, read N- to C-terminus: MNQQLIPAIKVKDLSFYYNTSKAIEGISMDIYRNKVTAIIGPSGCGKSTFIKTLNRISELEGPVKVEGVVDFFGQNIYDPRININRLRRQIGMVFQRPNPFPMSIYENVAYGVRISAKLPQADLDEIVESALKGAALWQEVKDKLNKSALGLSGGQQQRLCIARALAIKPKVLLMDEPCSALDPIATMKVEELIHSLRSELTIAIVTHNMQQATRVSDFTAFFSTDESRIGQMVEFGVTTQIFSNPLDSRTRDYVSGRFG.

An ABC transporter domain is found at 9–255 (IKVKDLSFYY…PLDSRTRDYV (247 aa)). ATP is bound at residue 41–48 (GPSGCGKS).

Belongs to the ABC transporter superfamily. Phosphate importer (TC 3.A.1.7) family. In terms of assembly, the complex is composed of two ATP-binding proteins (PstB), two transmembrane proteins (PstC and PstA) and a solute-binding protein (PstS).

The protein resides in the cell inner membrane. It catalyses the reaction phosphate(out) + ATP + H2O = ADP + 2 phosphate(in) + H(+). Its function is as follows. Part of the ABC transporter complex PstSACB involved in phosphate import. Responsible for energy coupling to the transport system. This is Phosphate import ATP-binding protein PstB 5 from Trichormus variabilis (strain ATCC 29413 / PCC 7937) (Anabaena variabilis).